Consider the following 197-residue polypeptide: MSEALELLGQDIVARAPGVLGHSVAFGELTIVARAASVIDTLTFLRDDAACRFHQLIDLTGVDYPERAARFDVVYHLLSLVKNHRIRLKVSTDEDTPVPSVTPVFPVADWFEREAFDMYGIFFDGHPDLRRILTDYGFHGHPLRKDFPMTGYVEVRYDDELKRVVYEPVKITEFRAFDFLSPWEGAKYALPGDEKAQ.

Belongs to the complex I 30 kDa subunit family. In terms of assembly, NDH-1 is composed of 14 different subunits. Subunits NuoB, C, D, E, F, and G constitute the peripheral sector of the complex.

The protein localises to the cell inner membrane. It carries out the reaction a quinone + NADH + 5 H(+)(in) = a quinol + NAD(+) + 4 H(+)(out). In terms of biological role, NDH-1 shuttles electrons from NADH, via FMN and iron-sulfur (Fe-S) centers, to quinones in the respiratory chain. The immediate electron acceptor for the enzyme in this species is believed to be ubiquinone. Couples the redox reaction to proton translocation (for every two electrons transferred, four hydrogen ions are translocated across the cytoplasmic membrane), and thus conserves the redox energy in a proton gradient. This chain is NADH-quinone oxidoreductase subunit C, found in Caulobacter vibrioides (strain ATCC 19089 / CIP 103742 / CB 15) (Caulobacter crescentus).